The primary structure comprises 217 residues: Peroxiredoxin (217 aa).

The 158-residue stretch at 2 to 159 (VVIGEKFPEV…VVRLVKALQT (158 aa)) folds into the Thioredoxin domain. Cys46 serves as the catalytic Cysteine sulfenic acid (-SOH) intermediate. Residue Arg122 participates in substrate binding.

It belongs to the peroxiredoxin family. Prx6 subfamily. Homodecamer. Pentamer of dimers that assemble into a ring structure.

It localises to the cytoplasm. It carries out the reaction a hydroperoxide + [thioredoxin]-dithiol = an alcohol + [thioredoxin]-disulfide + H2O. Its function is as follows. Thiol-specific peroxidase that catalyzes the reduction of hydrogen peroxide and organic hydroperoxides to water and alcohols, respectively. Plays a role in cell protection against oxidative stress by detoxifying peroxides. The protein is Peroxiredoxin of Methanococcus maripaludis (strain C5 / ATCC BAA-1333).